A 406-amino-acid chain; its full sequence is Vacuole membrane protein 1 (406 aa).

Residues 1–22 (MAENGTDCEQRRVGMPKEQNNG) form a disordered region. Over 1–42 (MAENGTDCEQRRVGMPKEQNNGSFQDPSFMCNRKRRDREERQ) the chain is Cytoplasmic. Residues 43–63 (SIVLWRKPLITLQYFILEVLI) traverse the membrane as a helical segment. Residues 64–76 (NLKEWSVRLWHRR) lie on the Extracellular side of the membrane. The chain crosses the membrane as a helical span at residues 77-97 (MMVVSVLLLLAVLSVAYYIEG). The Cytoplasmic portion of the chain corresponds to 98 to 110 (EHQQCVQYIEKKC). A helical membrane pass occupies residues 111 to 131 (LWCAYWVGLGILSSVGLGTGL). Over 132–250 (HTFLLYLGPH…ATRAKLTVQN (119 aa)) the chain is Extracellular. The segment at 173 to 316 (GTEGAISLWT…FVIITFSKHI (144 aa)) is VTT domain. A helical transmembrane segment spans residues 251–271 (LVQKVGFLGILACASIPNPLF). Residues 272 to 273 (DL) are Cytoplasmic-facing. A helical membrane pass occupies residues 274-294 (AGITCGHFLVPFWTFFGATLI). Over 295 to 306 (GKAIIKMHIQKL) the chain is Extracellular. A helical membrane pass occupies residues 307–327 (FVIITFSKHIVEQMVSLIGVI). Topologically, residues 328 to 363 (PSIGPSLQKPFQEYLEAQRKKLHHKGDSGTPQSENW) are cytoplasmic. Residues 364-384 (LSWAFEKLVIIMVFYFILSII) form a helical membrane-spanning segment. Residues 385-406 (NSMAQSYAKRVQQKKLSVEKTK) are Extracellular-facing.

This sequence belongs to the VMP1 family.

Its subcellular location is the endoplasmic reticulum-Golgi intermediate compartment membrane. The protein localises to the cell membrane. It localises to the vacuole membrane. It is found in the endoplasmic reticulum membrane. The catalysed reaction is a 1,2-diacyl-sn-glycero-3-phospho-L-serine(in) = a 1,2-diacyl-sn-glycero-3-phospho-L-serine(out). It catalyses the reaction cholesterol(in) = cholesterol(out). The enzyme catalyses a 1,2-diacyl-sn-glycero-3-phosphocholine(in) = a 1,2-diacyl-sn-glycero-3-phosphocholine(out). It carries out the reaction a 1,2-diacyl-sn-glycero-3-phosphoethanolamine(in) = a 1,2-diacyl-sn-glycero-3-phosphoethanolamine(out). In terms of biological role, phospholipid scramblase involved in lipid homeostasis and membrane dynamics processes. Has phospholipid scramblase activity toward cholesterol and phosphatidylserine, as well as phosphatidylethanolamine and phosphatidylcholine. Required for autophagosome formation: participates in early stages of autophagosome biogenesis at the endoplasmic reticulum (ER) membrane by reequilibrating the leaflets of the ER as lipids are extracted by atg2 (atg2a or atg2b) to mediate autophagosome assembly. In addition to autophagy, involved in other processes in which phospholipid scramblase activity is required. Modulates ER contacts with lipid droplets, mitochondria and endosomes. The chain is Vacuole membrane protein 1 from Xenopus laevis (African clawed frog).